The chain runs to 180 residues: Trafficking protein particle complex subunit 3 (180 aa).

Cys-68 is lipidated: S-palmitoyl cysteine.

Belongs to the TRAPP small subunits family. BET3 subfamily. In terms of assembly, homodimer. Component of the multisubunit transport protein particle (TRAPP) complex, which includes at least TRAPPC2, TRAPPC2L, TRAPPC3, TRAPPC3L, TRAPPC4, TRAPPC5, TRAPPC8, TRAPPC9, TRAPPC10, TRAPPC11 and TRAPPC12. Heterodimer with TRAPPC6A. The heterodimer TRAPPC3-TRAPPC6A interacts with TRAPPC2L. Heterodimer with TRAPPC6b. The heterodimer TRAPPC6B-TRAPPC3 interacts with TRAPPC1 likely providing a core for TRAPP complex formation.

The protein localises to the golgi apparatus. Its subcellular location is the cis-Golgi network. It is found in the endoplasmic reticulum. Its function is as follows. May play a role in vesicular transport from endoplasmic reticulum to Golgi. In Homo sapiens (Human), this protein is Trafficking protein particle complex subunit 3.